The chain runs to 508 residues: UDP-N-acetylmuramyl-tripeptide synthetase (508 aa).

Residue Ser35 coordinates UDP-N-acetyl-alpha-D-muramoyl-L-alanyl-D-glutamate. 118-124 (GTDGKSS) is a binding site for ATP. UDP-N-acetyl-alpha-D-muramoyl-L-alanyl-D-glutamate is bound by residues 163–164 (ST), Thr190, and Arg200. Lys232 carries the N6-carboxylysine modification.

It belongs to the MurCDEF family. MurE subfamily. Carboxylation is probably crucial for Mg(2+) binding and, consequently, for the gamma-phosphate positioning of ATP.

Its subcellular location is the cytoplasm. It functions in the pathway cell wall biogenesis; peptidoglycan biosynthesis. Catalyzes the addition of an amino acid to the nucleotide precursor UDP-N-acetylmuramoyl-L-alanyl-D-glutamate (UMAG) in the biosynthesis of bacterial cell-wall peptidoglycan. This is UDP-N-acetylmuramyl-tripeptide synthetase from Borrelia garinii subsp. bavariensis (strain ATCC BAA-2496 / DSM 23469 / PBi) (Borreliella bavariensis).